The sequence spans 129 residues: Intraflagellar transport protein 20 homolog (129 aa).

Positions 89-121 (VLLQMTIRELTVEKERLRVELEAVRKIEKEQDE) form a coiled coil.

In terms of assembly, component of the IFT complex B composed of at least che-2, che-13, dyf-1, dyf-3, dyf-6, dyf-11, dyf-13, ift-20, ift-74, ift-81, ifta-2, osm-1, osm-5 and osm-6.

Its subcellular location is the cell projection. The protein resides in the cilium. In terms of biological role, component of the intraflagellar transport (IFT) complex B required for transport of proteins in the motile cilium. Required for ciliary entrance and transport of specific ciliary cargo proteins such as che-3 which are related to motility. This is Intraflagellar transport protein 20 homolog from Caenorhabditis elegans.